The sequence spans 502 residues: Hippocampus abundant transcript-like protein 1 (502 aa).

Positions 1 to 12 (MNAEPPEEKAAS) are enriched in basic and acidic residues. The disordered stretch occupies residues 1 to 27 (MNAEPPEEKAASEAEAGAMPEKRAGSR). Residues 1–46 (MNAEPPEEKAASEAEAGAMPEKRAGSRAAGGNSLQGFGRPSVYHAA) are Extracellular-facing. A helical transmembrane segment spans residues 47–67 (IVIFLEFFAWGLLTTSMLTVL). The Cytoplasmic segment spans residues 68-79 (HETFPQHTFLMN). Residues 80-100 (GLIQGVKGLLSFLSAPLIGAL) traverse the membrane as a helical segment. The Extracellular segment spans residues 101–108 (SDVWGRKP). Residues 109–129 (FLLGTVFFTCFPIPLMRISPW) form a helical membrane-spanning segment. Residues 130-131 (WY) lie on the Cytoplasmic side of the membrane. A helical transmembrane segment spans residues 132–152 (FAMISISGVFSVTFSVIFAYV). The Extracellular portion of the chain corresponds to 153–165 (ADVTQEHERSTAY). A helical membrane pass occupies residues 166–186 (GWVSATFAASLVSSPAIGAYL). Residues 187–193 (SASYGDS) lie on the Cytoplasmic side of the membrane. Residues 194–214 (LVVLVATVVALLDICFILLAV) traverse the membrane as a helical segment. Residues 215–248 (PESLPEKMRPLSWGARISWKQADPFASLKKVGKD) lie on the Extracellular side of the membrane. Residues 249-269 (STILLICITVFLSYLPEAGQY) form a helical membrane-spanning segment. At 270 to 278 (SSFFLYLRQ) the chain is on the cytoplasmic side. A helical membrane pass occupies residues 279 to 299 (VIGFGSIKIAAFIAMVGILSI). The Extracellular segment spans residues 300-316 (VAQTVFLTSLMRSLGNK). A helical transmembrane segment spans residues 317-337 (NTVLLGLGFQMFQLAWYGFGS). Position 338 (Q338) is a topological domain, cytoplasmic. Residues 339-359 (AWMMWAAGIVAAVSSITFPAV) traverse the membrane as a helical segment. Over 360 to 384 (STLVSQNADSNQQGVAQGIITGIRG) the chain is Extracellular. A helical transmembrane segment spans residues 385–405 (LCNGLGPALYGFIFYMFHVEL). Over 406–425 (TELEPELISNNAALQGAVIP) the chain is Cytoplasmic. Residues 426–446 (GPPFLFGACIVFMSFLVAVFI) traverse the membrane as a helical segment. Residues 447–502 (PEYSKGGIQKHSNSISGSLANTPERGSDEDIEPLLQDSSIWELSSLEEPGHQCTEL) are Extracellular-facing.

Belongs to the major facilitator superfamily.

Its subcellular location is the membrane. In Bos taurus (Bovine), this protein is Hippocampus abundant transcript-like protein 1.